A 393-amino-acid polypeptide reads, in one-letter code: Protein TsgA (393 aa).

The Cytoplasmic portion of the chain corresponds to 1 to 10 (MTNSNRIKLT). Residues 11–31 (WISFLSYALTGALVIVTGMVM) form a helical membrane-spanning segment. Over 32 to 50 (GNIADYFHLPVSSMSNTFT) the chain is Periplasmic. The chain crosses the membrane as a helical span at residues 51–71 (FLNAGILISIFLNAWLMEIVP). Topologically, residues 72-77 (LKTQLR) are cytoplasmic. A helical membrane pass occupies residues 78 to 98 (FGFILMVLAVAGLMFSHSLAL). Over 99–100 (FS) the chain is Periplasmic. Residues 101 to 121 (AAMFVLGLVSGITMSIGTFLI) traverse the membrane as a helical segment. Residues 122-133 (TQLYEGRQRGSR) are Cytoplasmic-facing. Residues 134 to 154 (LLFTDSFFSMAGMIFPMVAAF) traverse the membrane as a helical segment. At 155–161 (LLARSIE) the chain is on the periplasmic side. A helical transmembrane segment spans residues 162 to 182 (WYWVYACIGLVYLAIFILTFG). At 183 to 205 (CEFPALGKHAQHSQAPVVKEKWG) the chain is on the cytoplasmic side. The chain crosses the membrane as a helical span at residues 206–226 (IGVLFLAVAALCYILGQLGFI). Residues 227 to 244 (SWVPEYAKGLGMSLNDAG) are Periplasmic-facing. The chain crosses the membrane as a helical span at residues 245 to 265 (ALVSDFWMSYMFGMWAFSFIL). Residues 266 to 272 (RFFDLQR) lie on the Cytoplasmic side of the membrane. Residues 273–293 (ILTVLAGMAAVLMYLFITGTQ) form a helical membrane-spanning segment. The Periplasmic portion of the chain corresponds to 294-297 (AHMP). A helical transmembrane segment spans residues 298–318 (WFILTLGFFSSAIYTSIITLG). Residues 319 to 331 (SQQTKVASPKLVN) lie on the Cytoplasmic side of the membrane. The helical transmembrane segment at 332 to 352 (FILTCGTIGTMLTFVVTGPIV) threads the bilayer. At 353 to 360 (AHSGPQAA) the chain is on the periplasmic side. The chain crosses the membrane as a helical span at residues 361-381 (LLTANGLYAVVFVMCFALGFV). Residues 382–393 (SRHRQHSSPAAH) are Cytoplasmic-facing.

Belongs to the major facilitator superfamily. TsgA family.

The protein resides in the cell inner membrane. The chain is Protein TsgA from Salmonella paratyphi A (strain ATCC 9150 / SARB42).